The primary structure comprises 557 residues: Carboxypeptidase Y homolog A (557 aa).

Residues 1 to 17 (MRVLPAAMLVGAATAAV) form the signal peptide. Residues 18-138 (PPFQQVLGGN…KLEAYDLRVK (121 aa)) constitute a propeptide that is removed on maturation. Cystine bridges form between Cys193–Cys433, Cys327–Cys341, Cys351–Cys374, Cys358–Cys367, and Cys396–Cys403. Asn224 is a glycosylation site (N-linked (GlcNAc...) asparagine). The active site involves Ser280. Residue Asp472 is part of the active site. Asn523 is a glycosylation site (N-linked (GlcNAc...) asparagine). The active site involves His534.

This sequence belongs to the peptidase S10 family.

It is found in the vacuole. The enzyme catalyses Release of a C-terminal amino acid with broad specificity.. Vacuolar carboxypeptidase involved in degradation of small peptides. Digests preferentially peptides containing an aliphatic or hydrophobic residue in P1' position, as well as methionine, leucine or phenylalanine in P1 position of ester substrate. The chain is Carboxypeptidase Y homolog A (cpyA) from Aspergillus niger (strain ATCC MYA-4892 / CBS 513.88 / FGSC A1513).